Consider the following 371-residue polypeptide: MLGSRAAGFARGLRAVALAWLPGWRGRSFALARAAGAPHGGDLQPPACPEPRGRQLSLSAAAVVDSAPRPLQPYLRLMRLDKPIGTWLLYLPCTWSIGLAAEPGCFPDWYMLSLFGTGAILMRGAGCTINDMWDQDYDKKVTRTANRPIAAGDISTFQSFVFLGGQLTLALGVLLCLNYYSIALGAGSLLLVITYPLMKRISYWPQLALGLTFNWGALLGWSAIKGSCDPSVCLPLYFSGVMWTLIYDTIYAHQDKRDDVLIGLKSTALRFGENTKPWLSGFSVAMLGALSLVGVNSGQTAPYYAALGAVGAHLTHQIYTLDIHRPEDCWNKFISNRTLGLIVFLGIVLGNLWKEKKTDKTKKGIENKIEN.

The transit peptide at 1-34 (MLGSRAAGFARGLRAVALAWLPGWRGRSFALARA) directs the protein to the mitochondrion. Residues 35–83 (AGAPHGGDLQPPACPEPRGRQLSLSAAAVVDSAPRPLQPYLRLMRLDKP) are Mitochondrial matrix-facing. A helical transmembrane segment spans residues 84 to 104 (IGTWLLYLPCTWSIGLAAEPG). Residues 105–108 (CFPD) are Mitochondrial intermembrane-facing. Residues 109–129 (WYMLSLFGTGAILMRGAGCTI) form a helical membrane-spanning segment. The Mitochondrial matrix segment spans residues 130–148 (NDMWDQDYDKKVTRTANRP). A helical membrane pass occupies residues 149–169 (IAAGDISTFQSFVFLGGQLTL). The Mitochondrial intermembrane portion of the chain corresponds to 170–172 (ALG). A helical transmembrane segment spans residues 173 to 193 (VLLCLNYYSIALGAGSLLLVI). Residues 194–203 (TYPLMKRISY) are Mitochondrial matrix-facing. A helical transmembrane segment spans residues 204–224 (WPQLALGLTFNWGALLGWSAI). The Mitochondrial intermembrane portion of the chain corresponds to 225-231 (KGSCDPS). Residues 232 to 252 (VCLPLYFSGVMWTLIYDTIYA) traverse the membrane as a helical segment. At 253–277 (HQDKRDDVLIGLKSTALRFGENTKP) the chain is on the mitochondrial matrix side. A helical membrane pass occupies residues 278-298 (WLSGFSVAMLGALSLVGVNSG). At 299–300 (QT) the chain is on the mitochondrial intermembrane side. Residues 301–321 (APYYAALGAVGAHLTHQIYTL) traverse the membrane as a helical segment. The Mitochondrial matrix portion of the chain corresponds to 322–332 (DIHRPEDCWNK). A helical membrane pass occupies residues 333 to 353 (FISNRTLGLIVFLGIVLGNLW). Residues 354–371 (KEKKTDKTKKGIENKIEN) lie on the Mitochondrial intermembrane side of the membrane.

The protein belongs to the UbiA prenyltransferase family. It depends on Mg(2+) as a cofactor. In terms of tissue distribution, widely expressed. Present in all of the tissues tested. Expressed at higher level in skeletal muscle, adrenal glands and the heart.

Its subcellular location is the mitochondrion inner membrane. The enzyme catalyses an all-trans-polyprenyl diphosphate + 4-hydroxybenzoate = a 4-hydroxy-3-(all-trans-polyprenyl)benzoate + diphosphate. The catalysed reaction is all-trans-decaprenyl diphosphate + 4-hydroxybenzoate = 4-hydroxy-3-(all-trans-decaprenyl)benzoate + diphosphate. It catalyses the reaction all-trans-nonaprenyl diphosphate + 4-hydroxybenzoate = 4-hydroxy-3-(all-trans-nonaprenyl)benzoate + diphosphate. The protein operates within cofactor biosynthesis; ubiquinone biosynthesis. In terms of biological role, mediates the second step in the final reaction sequence of coenzyme Q (CoQ) biosynthesis. Catalyzes the prenylation of para-hydroxybenzoate (PHB) with an all-trans polyprenyl donor (such as all-trans-decaprenyl diphosphate). The length of the polyprenyl side chain varies depending on the species, in humans, the side chain is comprised of 10 isoprenyls (decaprenyl) producing CoQ10 (also known as ubiquinone), whereas rodents predominantly generate CoQ9. However, this specificity is not complete, human tissues have low amounts of CoQ9 and rodent organs contain some CoQ10. Plays a central role in the biosynthesis of CoQ10. CoQ10 is a vital molecule that transports electrons from mitochondrial respiratory chain complexes. CoQs also function as cofactors for uncoupling protein and play a role as regulators of the extracellularly-induced ceramide-dependent apoptotic pathway. Regulates mitochondrial permeability transition pore (mPTP) opening and ROS production (pivotal events in cell death) in a tissue specific manner. This chain is 4-hydroxybenzoate polyprenyltransferase, mitochondrial, found in Homo sapiens (Human).